The following is a 431-amino-acid chain: Cleavage stimulation factor subunit 1 (431 aa).

Positions 14 to 35 (LYKLIISQLLYDGYISIANGLI) are hydrophobic. WD repeat units lie at residues 106–145 (SHKGPCRVATYSRDGQLIATGSADASIKILDTERMLAKSA), 171–210 (DHVDEVTCLAFHPTEQILASGSRDYTLKLFDYSKPSAKRA), 215–254 (QEAEMLRSISFHPSGDFILVGTQHPTLRLYDINTFQCFVS), 260–301 (QHTD…TTFE), 303–343 (AHDG…TLVR), and 395–430 (GHNNIVRCIVHSPTNPGFMTCSDDFRARFWYRRSTT).

As to quaternary structure, homodimer. The CSTF complex is composed of CSTF1 (50 kDa subunit), CSTF2 (64 kDa subunit) and CSTF3 (77 kDa subunit). Interacts (via repeats WD) directly with CSTF3. Interacts (via repeat WD6) with BARD1. Interacts with ERCC6. In terms of processing, the N-terminus is blocked.

The protein localises to the nucleus. In terms of biological role, one of the multiple factors required for polyadenylation and 3'-end cleavage of mammalian pre-mRNAs. May be responsible for the interaction of CSTF with other factors to form a stable complex on the pre-mRNA. The sequence is that of Cleavage stimulation factor subunit 1 (CSTF1) from Homo sapiens (Human).